The following is a 316-amino-acid chain: uncharacterized protein (316 aa).

It belongs to the asfivirus F317L family.

It is found in the virion. This is an uncharacterized protein from Ornithodoros (relapsing fever ticks).